The chain runs to 470 residues: MRIFNTLTRKKEEFIPITPGEVKMYVCGPTVYNFFHIGNGRTFIVFDTIRRYLEYRGYDVKFVQNFTDIDDKMIKKANEEGTTVKEIGDKYIKEYYEDADKLQIERATVNPRATEYIEDIIDFVAQLIEKGYAYEVEGDVYFNTKKFNDYGKLSGQSIEDLQMGASNRTSSVADERKKDPMDFAIWKSQKPGEPAWKCPWGMGRPGWHIECSCMAKKILGDTIDIHAGGMDLTFPHHENEVAQSEALTGVQFANYWMHSAYVNINNQKMSKSLNNFFTARDILKEYDSDVVRFFMMSAHYRLQINFSKDLLDSAKASVERLYNAIGNLENLIDEVSRENMNEEEVRYLNSLNKYREKYIEKMDDDFNTADALTVLFELTKDTNTNINVNSSKELVNKALDLIRELGAPLGLLQKITKGSLEDEIESLIQQRQDARKNKDFALSDKIRDDLKDRGIVLEDTPQGVRWKKIN.

Cysteine 27 serves as a coordination point for Zn(2+). The 'HIGH' region motif lies at 29–39; sequence PTVYNFFHIGN. Zn(2+) is bound by residues cysteine 211, histidine 236, and glutamate 240. Positions 268–272 match the 'KMSKS' region motif; it reads KMSKS. Position 271 (lysine 271) interacts with ATP.

Belongs to the class-I aminoacyl-tRNA synthetase family. As to quaternary structure, monomer. Zn(2+) is required as a cofactor.

Its subcellular location is the cytoplasm. It catalyses the reaction tRNA(Cys) + L-cysteine + ATP = L-cysteinyl-tRNA(Cys) + AMP + diphosphate. This Clostridium botulinum (strain Alaska E43 / Type E3) protein is Cysteine--tRNA ligase.